Here is a 117-residue protein sequence, read N- to C-terminus: MARIKRGTNNRKRHKKVLKQAKGYYGSKHTLFKTANQAVMKSLAYSYVGRKRRKRDFRKLWIARINAATRMHDLSYSKFMHGLKVAGVDLNRKVLADMAVRDEKEFAKLVELAKNNL.

It belongs to the bacterial ribosomal protein bL20 family.

Binds directly to 23S ribosomal RNA and is necessary for the in vitro assembly process of the 50S ribosomal subunit. It is not involved in the protein synthesizing functions of that subunit. This Finegoldia magna (strain ATCC 29328 / DSM 20472 / WAL 2508) (Peptostreptococcus magnus) protein is Large ribosomal subunit protein bL20.